The primary structure comprises 372 residues: Methenyltetrahydrofolate synthase domain-containing protein (372 aa).

Basic and acidic residues predominate over residues 246–258; that stretch reads KQAGKDVTLRDEP. The tract at residues 246–289 is disordered; that stretch reads KQAGKDVTLRDEPGSQQPAPGPIRRPQDRPQTGSRGGSRSPLQG. An RRM domain is found at 296–369; the sequence is ATVCVGNLPF…NALRVSLGQQ (74 aa).

The sequence is that of Methenyltetrahydrofolate synthase domain-containing protein (Mthfsd) from Mus musculus (Mouse).